Here is an 85-residue protein sequence, read N- to C-terminus: UPF0335 protein Atu3758 (85 aa).

Belongs to the UPF0335 family.

The protein is UPF0335 protein Atu3758 of Agrobacterium fabrum (strain C58 / ATCC 33970) (Agrobacterium tumefaciens (strain C58)).